A 515-amino-acid chain; its full sequence is 2-isopropylmalate synthase (515 aa).

The Pyruvate carboxyltransferase domain maps to 4–266; sequence ISVFDTTLRD…ETGLILKEIK (263 aa). Residues aspartate 13, histidine 201, histidine 203, and asparagine 237 each contribute to the Mn(2+) site. The interval 391 to 515 is regulatory domain; it reads ELQTLQVNYG…AEVYGSKVEV (125 aa).

It belongs to the alpha-IPM synthase/homocitrate synthase family. LeuA type 1 subfamily. In terms of assembly, homodimer. The cofactor is Mn(2+).

It localises to the cytoplasm. The enzyme catalyses 3-methyl-2-oxobutanoate + acetyl-CoA + H2O = (2S)-2-isopropylmalate + CoA + H(+). The protein operates within amino-acid biosynthesis; L-leucine biosynthesis; L-leucine from 3-methyl-2-oxobutanoate: step 1/4. Catalyzes the condensation of the acetyl group of acetyl-CoA with 3-methyl-2-oxobutanoate (2-ketoisovalerate) to form 3-carboxy-3-hydroxy-4-methylpentanoate (2-isopropylmalate). This chain is 2-isopropylmalate synthase, found in Halalkalibacterium halodurans (strain ATCC BAA-125 / DSM 18197 / FERM 7344 / JCM 9153 / C-125) (Bacillus halodurans).